We begin with the raw amino-acid sequence, 512 residues long: ATP synthase subunit alpha 2 (512 aa).

169–176 provides a ligand contact to ATP; sequence GDRQTGKT.

The protein belongs to the ATPase alpha/beta chains family. F-type ATPases have 2 components, CF(1) - the catalytic core - and CF(0) - the membrane proton channel. CF(1) has five subunits: alpha(3), beta(3), gamma(1), delta(1), epsilon(1). CF(0) has three main subunits: a(1), b(2) and c(9-12). The alpha and beta chains form an alternating ring which encloses part of the gamma chain. CF(1) is attached to CF(0) by a central stalk formed by the gamma and epsilon chains, while a peripheral stalk is formed by the delta and b chains.

The protein localises to the cell inner membrane. It catalyses the reaction ATP + H2O + 4 H(+)(in) = ADP + phosphate + 5 H(+)(out). Its function is as follows. Produces ATP from ADP in the presence of a proton gradient across the membrane. The alpha chain is a regulatory subunit. This is ATP synthase subunit alpha 2 from Vibrio campbellii (strain ATCC BAA-1116).